A 170-amino-acid polypeptide reads, in one-letter code: UPF0251 protein MA_1017 (170 aa).

It belongs to the UPF0251 family.

The sequence is that of UPF0251 protein MA_1017 from Methanosarcina acetivorans (strain ATCC 35395 / DSM 2834 / JCM 12185 / C2A).